A 353-amino-acid chain; its full sequence is UPF0283 membrane protein YcjF (353 aa).

3 helical membrane-spanning segments follow: residues 70 to 90, 100 to 120, and 213 to 233; these read MVMG…VQWT, VALG…GSVV, and ESTL…FIAW.

The protein belongs to the UPF0283 family.

The protein localises to the cell inner membrane. This Escherichia coli O45:K1 (strain S88 / ExPEC) protein is UPF0283 membrane protein YcjF.